We begin with the raw amino-acid sequence, 365 residues long: MTAIGLMSGTSLDGVDVALIKTDGRRVSALGPTGYRPYSDAERSLLRQALAEAGQLTRRDDRPGSLGEAERMVTLAHAEAAANFTAQHGIAREDVDIVGFHGQTVLHRPAQKLTVQIGDAAALAKAIRVPVMHDFRAADVAAGGQGAPLVPVYHRALAQSLDRSGPLAVVNIGGVSNISYIDGHETLIACDTGPGNALLDDFVLRVSGQPFDAEGRLAAQGQVDEAWVAAALQHPFFAAPPPKSLDRNEFAALALPKLTPADGAATLTAFTAGAIAGIVPLLPKLPLSWIVTGGGARNLSLLRMLREKLAPASVENADALGWSADAMEAQAFGFLAARGLKGLPLTYPQTTGVVIPMTGGRIARP.

ATP is bound at residue 9–16 (GTSLDGVD).

This sequence belongs to the anhydro-N-acetylmuramic acid kinase family.

The catalysed reaction is 1,6-anhydro-N-acetyl-beta-muramate + ATP + H2O = N-acetyl-D-muramate 6-phosphate + ADP + H(+). The protein operates within amino-sugar metabolism; 1,6-anhydro-N-acetylmuramate degradation. It functions in the pathway cell wall biogenesis; peptidoglycan recycling. Functionally, catalyzes the specific phosphorylation of 1,6-anhydro-N-acetylmuramic acid (anhMurNAc) with the simultaneous cleavage of the 1,6-anhydro ring, generating MurNAc-6-P. Is required for the utilization of anhMurNAc either imported from the medium or derived from its own cell wall murein, and thus plays a role in cell wall recycling. The polypeptide is Anhydro-N-acetylmuramic acid kinase (Rhodopseudomonas palustris (strain BisB18)).